The sequence spans 528 residues: MSRKRNHCYMETGASSESQGAFVDSAGPFSRDEEDFSELEPDEQLVCSVTEITEHLGRNITVVLESALSEIRKLVGVRIRVLKMELREKSDEIELLKAKLESAEKDGRVSNFSSLDFRKSEHQKYGAEPKKAKTGTPVVKKENINAICDYLMKDKNQRGAAEVESDHSNQAFGSERDVRTEAQPHGSLSLWPDSGPADTDAETDIFSMLPSASKRMYDYEWMTGVELNSAEFKGDSETKCEDVPPMDEEDENEDSEEGRGSLRSVSDHFPLDTQGSPGEDRSSPAEDSMDRMEPGQQFTSHTFICPFCGTLCPDSSFLEEHIKLMHHGESLLQSTSAGSSSQAEGDSGEAGPASRGAREKKVEGGYECGDCGRHFNYLGNLRQHQRIHTGEKPFVCPECGERFRHTARLKSHRLSHSGAQSPFPCPQCGKGFPVLSGLKRHQRVHTGESPYACPQCGRRFKELGNLYTHMRIHSGATPYTCYQCGRSFRHLGTYKSHRCMPATQMPSEHSPPWAQEDKVQTGRLQGYV.

The segment at 1–28 (MSRKRNHCYMETGASSESQGAFVDSAGP) is disordered. Positions 79-106 (IRVLKMELREKSDEIELLKAKLESAEKD) form a coiled coil. Disordered regions lie at residues 159–202 (GAAE…TDAE) and 232–293 (FKGD…DRME). The segment covering 232–242 (FKGDSETKCED) has biased composition (basic and acidic residues). Over residues 244 to 256 (PPMDEEDENEDSE) the composition is skewed to acidic residues. Basic and acidic residues-rich tracts occupy residues 257-270 (EGRG…DHFP) and 278-293 (GEDR…DRME). The C2H2-type 1 zinc-finger motif lies at 303–326 (FICPFCGTLCPDSSFLEEHIKLMH). The segment covering 333–345 (QSTSAGSSSQAEG) has biased composition (low complexity). A disordered region spans residues 333–359 (QSTSAGSSSQAEGDSGEAGPASRGARE). 4 C2H2-type zinc fingers span residues 366-388 (YECG…QRIH), 394-416 (FVCP…RLSH), 423-445 (FPCP…QRVH), and 451-473 (YACP…MRIH). Residues 479–501 (YTCYQCGRSFRHLGTYKSHRCMP) form a C2H2-type 6; degenerate zinc finger. The tract at residues 502-528 (ATQMPSEHSPPWAQEDKVQTGRLQGYV) is disordered.

Belongs to the krueppel C2H2-type zinc-finger protein family.

It is found in the nucleus. In terms of biological role, probable transcription factor. Important for development and migration of oligodendrocyte precursor cells, and normal myelination of axons in the central nervous system (CNS). Functions autonomously in oligodendrocytes to promote CNS myelination. Seems to act in parallel with notch3 during oligodendrocyte development. The chain is Zinc finger protein 16-like from Danio rerio (Zebrafish).